A 145-amino-acid polypeptide reads, in one-letter code: Ribonuclease H (145 aa).

An RNase H type-1 domain is found at 1–141; it reads MQEVELFTDG…VDELANQAMD (141 aa). Residues D9, E47, D69, and D133 each contribute to the Mg(2+) site.

It belongs to the RNase H family. Monomer. Mg(2+) serves as cofactor.

Its subcellular location is the cytoplasm. The catalysed reaction is Endonucleolytic cleavage to 5'-phosphomonoester.. Its function is as follows. Endonuclease that specifically degrades the RNA of RNA-DNA hybrids. In Hydrogenovibrio crunogenus (strain DSM 25203 / XCL-2) (Thiomicrospira crunogena), this protein is Ribonuclease H.